The sequence spans 600 residues: UvrABC system protein C (600 aa).

Residues 15-100 (NSAGVYQYFN…IKQLHPKYNI (86 aa)) enclose the GIY-YIG domain. One can recognise a UVR domain in the interval 203–238 (SVLLKNLEKQMLVLAQNENYEEAAKVRDQIAMIKDL).

This sequence belongs to the UvrC family. Interacts with UvrB in an incision complex.

The protein localises to the cytoplasm. In terms of biological role, the UvrABC repair system catalyzes the recognition and processing of DNA lesions. UvrC both incises the 5' and 3' sides of the lesion. The N-terminal half is responsible for the 3' incision and the C-terminal half is responsible for the 5' incision. This Campylobacter jejuni (strain RM1221) protein is UvrABC system protein C.